Reading from the N-terminus, the 195-residue chain is Calcineurin B homologous protein 1 (195 aa).

Glycine 2 carries the N-myristoyl glycine lipid modification. 4 EF-hand domains span residues 26-61 (SQIT…AINP), 66-101 (IINA…KSKD), 110-145 (SRSN…MVGV), and 151-186 (QLGS…VDVE). Ca(2+) is bound by residues aspartate 123, aspartate 125, aspartate 127, lysine 129, glutamate 134, aspartate 164, aspartate 166, aspartate 168, and glutamate 175.

It belongs to the calcineurin regulatory subunit family. CHP subfamily. As to quaternary structure, monomer. Phosphorylated. Post-translationally, calcium-binding or N-myristoylation are necessary for the Na(+)/H(+) exchange activities.

It localises to the nucleus. The protein localises to the cytoplasm. The protein resides in the cytoskeleton. Its subcellular location is the endomembrane system. It is found in the endoplasmic reticulum-Golgi intermediate compartment. It localises to the endoplasmic reticulum. The protein localises to the cell membrane. The protein resides in the membrane. Its function is as follows. Calcium-binding protein involved in different processes such as regulation of vesicular trafficking, plasma membrane Na(+)/H(+) exchanger and gene transcription. Involved in the constitutive exocytic membrane traffic. Mediates the association between microtubules and membrane-bound organelles of the endoplasmic reticulum and Golgi apparatus and is also required for the targeting and fusion of transcytotic vesicles (TCV) with the plasma membrane. Functions as an integral cofactor in cell pH regulation by controlling plasma membrane-type Na(+)/H(+) exchange activity. Inhibits serum- and GTPase-stimulated Na(+)/H(+) exchange. Plays a role as an inhibitor of ribosomal RNA transcription. Acts as a negative regulator of the calcineurin/NFAT signaling pathway. This is Calcineurin B homologous protein 1 (CHP1) from Gallus gallus (Chicken).